Reading from the N-terminus, the 482-residue chain is Glycogen synthase (482 aa).

An ADP-alpha-D-glucose-binding site is contributed by lysine 15.

The protein belongs to the glycosyltransferase 1 family. Bacterial/plant glycogen synthase subfamily.

The enzyme catalyses [(1-&gt;4)-alpha-D-glucosyl](n) + ADP-alpha-D-glucose = [(1-&gt;4)-alpha-D-glucosyl](n+1) + ADP + H(+). The protein operates within glycan biosynthesis; glycogen biosynthesis. Synthesizes alpha-1,4-glucan chains using ADP-glucose. This Hydrogenobaculum sp. (strain Y04AAS1) protein is Glycogen synthase.